Here is a 497-residue protein sequence, read N- to C-terminus: Acetyl-coenzyme A carboxylase carboxyl transferase subunit beta, chloroplastic (497 aa).

The segment at 30–50 (GPVENTTVNEDPTRNDTDKNI) is disordered. The segment covering 40 to 50 (DPTRNDTDKNI) has biased composition (basic and acidic residues). Residues 230 to 497 (VQCECENCYG…FFPLNQNSIK (268 aa)) enclose the CoA carboxyltransferase N-terminal domain. The Zn(2+) site is built by cysteine 232, cysteine 237, cysteine 253, and cysteine 256. Residues 232–256 (CECENCYGVNYKKSLNSKMNICEQC) form a C4-type zinc finger.

This sequence belongs to the AccD/PCCB family. In terms of assembly, acetyl-CoA carboxylase is a heterohexamer composed of biotin carboxyl carrier protein, biotin carboxylase and 2 subunits each of ACCase subunit alpha and ACCase plastid-coded subunit beta (accD). Zn(2+) serves as cofactor.

The protein localises to the plastid. It is found in the chloroplast stroma. It carries out the reaction N(6)-carboxybiotinyl-L-lysyl-[protein] + acetyl-CoA = N(6)-biotinyl-L-lysyl-[protein] + malonyl-CoA. Its pathway is lipid metabolism; malonyl-CoA biosynthesis; malonyl-CoA from acetyl-CoA: step 1/1. Its function is as follows. Component of the acetyl coenzyme A carboxylase (ACC) complex. Biotin carboxylase (BC) catalyzes the carboxylation of biotin on its carrier protein (BCCP) and then the CO(2) group is transferred by the transcarboxylase to acetyl-CoA to form malonyl-CoA. The chain is Acetyl-coenzyme A carboxylase carboxyl transferase subunit beta, chloroplastic from Gossypium hirsutum (Upland cotton).